The sequence spans 330 residues: Ketol-acid reductoisomerase (NADP(+)) (330 aa).

Residues 1-181 (MNIYYEQDAD…GGTKAGVIET (181 aa)) form the KARI N-terminal Rossmann domain. NADP(+)-binding positions include 24–27 (YGSQ), lysine 47, serine 50, serine 52, and 82–85 (DQTQ). Histidine 107 is a catalytic residue. Residue glycine 133 coordinates NADP(+). In terms of domain architecture, KARI C-terminal knotted spans 182–327 (SFKDETETDL…AKLRGMMSWL (146 aa)). Residues aspartate 190, glutamate 194, glutamate 226, and glutamate 230 each coordinate Mg(2+). Serine 251 is a substrate binding site.

This sequence belongs to the ketol-acid reductoisomerase family. Mg(2+) serves as cofactor.

The enzyme catalyses (2R)-2,3-dihydroxy-3-methylbutanoate + NADP(+) = (2S)-2-acetolactate + NADPH + H(+). It catalyses the reaction (2R,3R)-2,3-dihydroxy-3-methylpentanoate + NADP(+) = (S)-2-ethyl-2-hydroxy-3-oxobutanoate + NADPH + H(+). It functions in the pathway amino-acid biosynthesis; L-isoleucine biosynthesis; L-isoleucine from 2-oxobutanoate: step 2/4. It participates in amino-acid biosynthesis; L-valine biosynthesis; L-valine from pyruvate: step 2/4. In terms of biological role, involved in the biosynthesis of branched-chain amino acids (BCAA). Catalyzes an alkyl-migration followed by a ketol-acid reduction of (S)-2-acetolactate (S2AL) to yield (R)-2,3-dihydroxy-isovalerate. In the isomerase reaction, S2AL is rearranged via a Mg-dependent methyl migration to produce 3-hydroxy-3-methyl-2-ketobutyrate (HMKB). In the reductase reaction, this 2-ketoacid undergoes a metal-dependent reduction by NADPH to yield (R)-2,3-dihydroxy-isovalerate. This Chlorobaculum tepidum (strain ATCC 49652 / DSM 12025 / NBRC 103806 / TLS) (Chlorobium tepidum) protein is Ketol-acid reductoisomerase (NADP(+)).